Here is a 263-residue protein sequence, read N- to C-terminus: MKKIHPSAVIEEGAQLGDDVVVEAYAYVSKDAKIGNNVVIKQGARILSDTTIGDHSRVFSYAIVGDIPQDISYKEEQKSGVVIGKNATIREFATINSGTAKGDGFTRIGDNAFIMAYCHIAHDCLLGNNIILANNATLAGHVELGDFTVVGGLTPIHQFVKVGEGCMIAGASALSQDIVPFCLAEGNRASIRSLNLVGTRRRFDKDEVDRLSRAFKTLFRQGDLKENAKNLLENQESENVKKMCHFILETKRGIPVYRGKNNA.

This sequence belongs to the transferase hexapeptide repeat family. LpxA subfamily. As to quaternary structure, homotrimer.

The protein localises to the cytoplasm. It catalyses the reaction a (3R)-hydroxyacyl-[ACP] + UDP-N-acetyl-alpha-D-glucosamine = a UDP-3-O-[(3R)-3-hydroxyacyl]-N-acetyl-alpha-D-glucosamine + holo-[ACP]. The protein operates within glycolipid biosynthesis; lipid IV(A) biosynthesis; lipid IV(A) from (3R)-3-hydroxytetradecanoyl-[acyl-carrier-protein] and UDP-N-acetyl-alpha-D-glucosamine: step 1/6. Its function is as follows. Involved in the biosynthesis of lipid A, a phosphorylated glycolipid that anchors the lipopolysaccharide to the outer membrane of the cell. The protein is Acyl-[acyl-carrier-protein]--UDP-N-acetylglucosamine O-acyltransferase of Campylobacter jejuni (strain RM1221).